We begin with the raw amino-acid sequence, 809 residues long: Transitional endoplasmic reticulum ATPase homolog 1 (809 aa).

Residues 1–21 (MASVPTHQSEKEKKNDELSTA) are disordered. Residues 8–21 (QSEKEKKNDELSTA) are compositionally biased toward basic and acidic residues. Residues 253–259 (PGTGKTL), Asn354, His390, and 527–532 (GCGKTL) each bind ATP. Residues 779–809 (FGNNFKFPGEQRGSDAPSAPVPAQDDDDLYN) are disordered. Positions 803-809 (DDDDLYN) are interaction with ufd-2.

It belongs to the AAA ATPase family. CDC48 subfamily. As to quaternary structure, homohexamer; oligomerization is ATP-independent. Forms a ring-shaped particle of 18.3 nm diameter, that displays 6-fold radial symmetry. Interacts with cdc-48.2 and thus may form heterohexamers. Forms a complex composed of cdc-48.1, him-6 and crp-1; within the complex, interacts with helicase him-6 and GTPase crp-1. Forms a complex composed of deubiquitinating enzyme atx-3, adapter ubxn-5 and cdc-48.1; within the complex, interacts (via N-terminus) with ubxn-5 and with atx-3. Forms a complex composed of deubiquitinating enzyme atx-3, E4 ubiquitin-protein ligase ufd-2 and cdc-48.1; within the complex, interacts with atx-3 and (via DDDLYN motif) with ufd-2. Interacts (via N-terminus) with atx-3 (via RRDR motif); the interaction is not required for atx-3 enzymatic activity. Forms a complex composed of cdc-48.1, myosin chaperone unc-45, ubiquitin-protein ligases ufd-2 and chn-1; within the complex, interacts (via DDDLYN motif) with ufd-2 and targets myosin chaperone unc-45 for proteasomal degradation. Forms a complex composed of ubxn-3, ufd-1, npl-4.1 and cdc-48.1; within the complex, interacts (via N-terminus) with ubxn-3 (via FPK motif) and with ufd-1. Forms a complex composed of ubxn-3, cdc-48.1 and/or cdc-48.2 and substrate cdt-1. Interacts (via N-terminus) with ubxn-1. Interacts (via N-terminus) with ubxn-2. Interacts (via N-terminus) with ubxn-4. Interacts with ubxn-6. Interacts with ufd-3. Does not interact with air-2. Expressed in germ cells and spermatheca. Expressed in body wall muscles.

Its subcellular location is the cytoplasm. The protein resides in the perinuclear region. It carries out the reaction ATP + H2O = ADP + phosphate + H(+). With respect to regulation, the first ATP-binding region has low ATPase activity. The second ATP-binding region is responsible for ATPase activity. ATP binding to the first ATP-binding region induces intrinsic activity of the second ATP-binding region. While ATP binding to the first ATP-binding region appears to prevent ATP hydrolysis by the second ATP-binding region, ADP-binding to first region promotes the coordinate and cooperative ATPase cycle of the second ATP-binding region. ATP binding to the first ATP-binding region induces a conformational change, promoting the rotation of the first ATP-binding region relative to the second ATP-binding region in the hexamer. Inhibited by N-ethylmaleimide (NEM). Its function is as follows. ATP-dependent chaperone which probably uses the energy provided by ATP hydrolysis to generate mechanical force to unfold substrate proteins, disassemble protein complexes, and disaggregate protein aggregates. Can also prevent aggregation of unfolded proteins also in an ATP-independent manner. Targets polyubiquitinated proteins for proteasomal degradation by binding to 'Lys-48'-linked polyubiquitin chains. Involved in the cytoplasmic elimination of misfolded proteins exported from the ER. This pathway, known as ERAD, prevents the activation of the unfolded protein response (UPR) caused by the accumulation of misfolded proteins in the ER. In association with helicase him-6 and GTPase crp-1, regulates the unfolded protein response (UPR) following ER stress, probably independently of the ERAD pathway. Together with udf-2 and chn-1, regulates myosin assembly in body wall muscles by targeting myosin chaperone unc-45 for proteasomal degradation. Together with the ufd-1-npl-4 complex, controls the switch from spermatogenesis to oogenesis by regulating E3 ligase cul-2 complex-mediated tra-1 proteasomal degradation. During oocyte meiosis and together with cdc-48.2, required for chromosome condensation at the diakinesis phase in prophase I and for progression of metaphase I. During the first embryonic cell division, regulates DNA replication and thus chromosome segregation and decondensation, and nuclear envelope re-assembly. In S phase and in association with ufd-1, npl-4.1 and/or npl-4.2 and ubxn-3, ensures the degradation of DNA licensing factor cdt-1 after the initiation of DNA replication and thus the disassembly of the DNA replication CMG helicase complex by promoting the dissociation from chromatin of several of its components including cdc-45 and sld-5. Regulates ubxn-3 nuclear localization during S phase. During the first embryonic cell divisions and together with cdc-48.2, regulates the re-assembly of the nuclear envelope after mitosis possibly by inactivating kinase air-2, a component of the chromosomal passenger complex (CPC). However, in another study, cdc-48.1 does not appear to be implicated in the regulation of air-2. The polypeptide is Transitional endoplasmic reticulum ATPase homolog 1 (Caenorhabditis elegans).